The following is a 361-amino-acid chain: Putative F-box protein At3g18340 (361 aa).

The F-box domain maps to 1–46; sequence MASGKLPWELEEEILCRLPPGSLVRLRSVCKHWNDLYNDKWFIKKS.

The chain is Putative F-box protein At3g18340 from Arabidopsis thaliana (Mouse-ear cress).